The primary structure comprises 395 residues: Proteinase-activated receptor 2 (395 aa).

The N-terminal stretch at 1 to 25 (MRSPSAAWLLGGVLLLAASGSCNRT) is a signal peptide. N-linked (GlcNAc...) asparagine glycans are attached at residues Asn23 and Asn29. The propeptide at 26–34 (VPGNKSKGR) is removed for receptor activation. Residues 35-69 (SLIGNVDNSPVVAGRGVTVKPGFSVDEFSTSVLTG) lie on the Extracellular side of the membrane. Residues 70-99 (KLTTVFLPVVYTIVFVVGLPSNGMALWVFL) traverse the membrane as a helical segment. Over 100–106 (FRTKKKH) the chain is Cytoplasmic. The chain crosses the membrane as a helical span at residues 107–135 (PAVIYMANLALADLLSVTWFPLKIAYHIH). The Extracellular portion of the chain corresponds to 136-147 (GNNWIYGESLCK). Cys146 and Cys224 are disulfide-bonded. Residues 148-175 (VLIGFFYGNMYCSILFMTCLSVQRYWVI) form a helical membrane-spanning segment. At 176–181 (VNPMVH) the chain is on the cytoplasmic side. The helical transmembrane segment at 182–209 (PKKQANIAIGVSLGIWLLILLLTIPLYV) threads the bilayer. Residues 210–233 (VKQTSYIRALNITTCHDVLPEEVL) lie on the Extracellular side of the membrane. N-linked (GlcNAc...) asparagine glycosylation occurs at Asn220. Residues 234-267 (VGDMFNYFLSLAIGVFLFPAFLTASAYVLMIRTL) traverse the membrane as a helical segment. The Cytoplasmic portion of the chain corresponds to 268–275 (QSSAMDES). The chain crosses the membrane as a helical span at residues 276-315 (SGKKRRRAIKLIVTVLAMYLICFTPSNLLLVVHYFLIKTR). Residues 316-321 (GQSHVY) are Extracellular-facing. A helical membrane pass occupies residues 322–345 (ALYIVALCLSTLNSCIDPFVYYFI). At 346 to 395 (SQDFRDHAKNALLCRSVRTVKRMQVSLSSKKFSGKSSSYSSSSTSVKGSY) the chain is on the cytoplasmic side. Cys359 carries the S-palmitoyl cysteine lipid modification.

It belongs to the G-protein coupled receptor 1 family. Interacts with TLR4, COPS5 and TMED2. Interacts with GNAQ, GNA11, GNA12, GNA13 and GNA14. In terms of processing, a proteolytic cleavage generates a new N-terminus that functions as a tethered ligand. Activating serine proteases include trypsin, mast cell tryptase, coagulation factors VII and Xa, myeloblastin/PRTN3 and membrane-type serine protease 1/ST14. Proposed subsequent cleavage by serine proteases is leading to receptor deactivation and include neutrophil elastase and cathepsin G. At least in part, implicated proteases are also shown to activate the receptor; the glycosylation status of the receptor is thought to contribute to the difference. Post-translationally, N-glycosylated and sialylated. Multiple phosphorylated on serine and threonine residues in the cytoplasmic region upon receptor activation; required for receptor desensitization and recruitment of beta-arrestin. In terms of processing, monoubiquitinated by CBL at the plasma membrane and in early endosomes; not required for receptor endocytosis but for translocation to late endosomes or lysosomes. Deubiquitination involves STAMBP and USP8; required for lysosomal trafficking and receptor degradation.

It localises to the cell membrane. Its function is as follows. Receptor for trypsin and trypsin-like enzymes coupled to G proteins. Its function is mediated through the activation of several signaling pathways including phospholipase C (PLC), intracellular calcium, mitogen-activated protein kinase (MAPK), I-kappaB kinase/NF-kappaB and Rho. Can also be transactivated by cleaved F2R/PAR1. Involved in modulation of inflammatory responses and regulation of innate and adaptive immunity, and acts as a sensor for proteolytic enzymes generated during infection. Generally is promoting inflammation. Can signal synergistically with TLR4 and probably TLR2 in inflammatory responses and modulates TLR3 signaling. Has a protective role in establishing the endothelial barrier; the activity involves coagulation factor X. Regulates endothelial cell barrier integrity during neutrophil extravasation, probably following proteolytic cleavage by PRTN3. Proposed to have a bronchoprotective role in airway epithelium, but also shown to compromise the airway epithelial barrier by interrupting E-cadherin adhesion. Involved in the regulation of vascular tone; activation results in hypotension presumably mediated by vasodilation. Associates with a subset of G proteins alpha subunits such as GNAQ, GNA11, GNA14, GNA12 and GNA13, but probably not with G(o) alpha, G(i) subunit alpha-1 and G(i) subunit alpha-2. Believed to be a class B receptor which internalizes as a complex with arrestin and traffic with it to endosomal vesicles, presumably as desensitized receptor, for extended periods of time. Mediates inhibition of TNF-alpha stimulated JNK phosphorylation via coupling to GNAQ and GNA11; the function involves dissociation of RIPK1 and TRADD from TNFR1. Mediates phosphorylation of nuclear factor NF-kappa-B RELA subunit at 'Ser-536'; the function involves IKBKB and is predominantly independent of G proteins. Involved in cellular migration. Involved in cytoskeletal rearrangement and chemotaxis through beta-arrestin-promoted scaffolds; the function is independent of GNAQ and GNA11 and involves promotion of cofilin dephosphorylation and actin filament severing. Induces redistribution of COPS5 from the plasma membrane to the cytosol and activation of the JNK cascade is mediated by COPS5. Involved in the recruitment of leukocytes to the sites of inflammation and is the major PAR receptor capable of modulating eosinophil function such as pro-inflammatory cytokine secretion, superoxide production and degranulation. During inflammation promotes dendritic cell maturation, trafficking to the lymph nodes and subsequent T-cell activation. Involved in antimicrobial response of innate immune cells; activation enhances phagocytosis of Gram-positive and killing of Gram-negative bacteria. Acts synergistically with interferon-gamma in enhancing antiviral responses. Probably mediates activation of pro-inflammatory and pro-fibrotic responses in fibroblasts, triggered by coagulation factor Xa (F10). Probably mediates activation of barrier protective signaling responses in endothelial cells, triggered by coagulation factor Xa (F10). The chain is Proteinase-activated receptor 2 (F2RL1) from Bos taurus (Bovine).